Here is a 343-residue protein sequence, read N- to C-terminus: Dihydroorotase (343 aa).

Zn(2+) contacts are provided by His14 and His16. Residues 16–18 (HVR) and Asn42 contribute to the substrate site. Residues Lys99, His136, and His174 each coordinate Zn(2+). Lys99 is modified (N6-carboxylysine). His136 provides a ligand contact to substrate. A substrate-binding site is contributed by Leu219. Residue Asp247 coordinates Zn(2+). The active site involves Asp247. His251 and Ala263 together coordinate substrate.

Belongs to the metallo-dependent hydrolases superfamily. DHOase family. Class II DHOase subfamily. In terms of assembly, homodimer. Requires Zn(2+) as cofactor.

It catalyses the reaction (S)-dihydroorotate + H2O = N-carbamoyl-L-aspartate + H(+). The protein operates within pyrimidine metabolism; UMP biosynthesis via de novo pathway; (S)-dihydroorotate from bicarbonate: step 3/3. Catalyzes the reversible cyclization of carbamoyl aspartate to dihydroorotate. This chain is Dihydroorotase, found in Variovorax paradoxus (strain S110).